A 2648-amino-acid chain; its full sequence is MDGIDPETLLEWLQTGIGDERDLQLMALEQLCMLLLMADNIDRCFESCPPRTFIPALCKIFIDETAPDNVLEVTARAITYYLDVSNECTRRITQVDGAVKAICTRLAAADISDRSSKDLAEQCVKLLEHVCQRETMAVYDAGGINAMLTLVRVHGTQVHKDTMHSAMSVVTRLCGKMEPTDPELGKCAESLGALLEHEDPKVSESALRCFAALTDRFVRKMMDPAELAMHSNLVEHLISIMVASNDENSPTTASANILSIVLSLIGNLCRGSSLITEKVLTSPNMITGLKATLTNKEERVVTDGLRFCDLLLVLLCEGRSALPLTSVVSGDYAAGSGAERVHRQLIDAIRQKDLTALVDAIESGQVDVNFADDVGQSLTNWASAFGSIEMVQYLCDKGSDVNKGHKSSSLHYAACFGRPDVVKLLLQRGANPDLRDEDGKTALDKARERSDDDHNQVANILESPSAFMRNKEDPKVKASTSKQPGTSTKPELPNPNLVRKVLHQLLPIFCEIFQKSLNGSVRRTSLSLMRKIVENIGDLRQSAVGDGNAPAAQSARKMSTDVSAGAESLVAVVVSVMDQEDDHEGHEQVLLILESLLEKDAELWVIELVRLGVFERVEAMAKEPPKGLEEVLNAIHLEGRSRVTPMEIDFENQPSSSTAVPTANDIMDTTVPSSSGGADAESNSNPSTIEMADPESSTPSSSTQQSISKPKATASSTASSAILQVVSKLSSVASLDKSAAAVDKKPTKTVLSQGTPYRWKEWRIVRGTTSLFIWSDVLLIELPFQSNGWFRYLADNDSHVQFVTGTASVDQQMTEEEKDNFQKTERREMVSRWNAVKGVFDDDWSSVPIAVLGIPSNAKKVSQKLEVPAWELWSSKSSELQIKSISSSAPTGQANTMLTTIKDDAGGFLFETGTGRKTNVMPEHALPSDFHTGWSSHGVSTRKMKFRQDIQKRKVQELAWKLWNDHLKEAHAKPREALVRLENAARTIESTIRHVKAQSNFKHRNVKQPRIERVQEYCAAISTLHESIVDDRRLSTFEFSVSGIVPALFGLLSMMEKFPDSFPSRIFKEQFSKGEALSYLALKIVAVLEANEKFPQHLYDSPGGSSFGLQLLSRRVRTKLEMLPRADGKENNDENLVNKTGKIVKCEPLASVGAIRAYLHRMVTRQWHDRERANYRYVKEIQELKTKGKSIELRHVSDFDENGVIYWIGTNGRAAPLWTNPATVKAVKITCSDTRQPFGKPEDLLSRDQNPINCHTSDDKNAHFTIDLGLFVVPTSYSLRHSRGYGRSALRNWMLQGSVDAKRWENVIVHTDDKGLGEPGSTATWHVGEKGTTAFRFFRIAQNGKNSSGQTHYLSCSGFEIYGDIVDVVTEAICEDPPKKDSPAGTSSTPGSSSSAALPPLTKEQVLEMLPARENNNRLKSGLSLETVTSMLQRSRHRSRGSYKISESKSKVVRGKDWRWEDQDGGEGKFGRITSPPESGWVDVTWDNGNANSYRFGANGNFDIERVTSTGHRYSTPSLASHVPTSVMEAVRRNRAFYTPKTTGGPPSSSVFGTSSSAGSSRGAASALSRFASVKNTTPAGTPSSGGSSGGAIGKKSMSTTNLVDERQKTSGPSVASTGQAASAESLQHQTPSLENLLARAMPHAFGRIAENQEPEDEPMGGEESDSAASMRSAASSNSQMSMGSSSQQQQQQDSDMTPRDSAGTPSTPRDDKNQTLSVSAPDLAAARQRQASAETDGDADADETNSEDKTVGADDAMEEDDEEEETMEDEEDDDDDDDDESSNENQEKLVELLGGERGLFDKLKEVITGESLSDASSSAKDATTNEAQKKGGKKPKKWFKKMSSYTDVLKGLMQNRYPVALLDPAAAGIEMDEMMDDDDYYDFSEDGPDDGDSVEDEVAAHLGMPVDSFASMVAARTPITWRQFSELMSGSNRERAAMARAVASSRGSPWEDDATVKCTFEALIPAFDPRPGRSNVNQTLEVELPTVVKDFGSTKASSSKIDKDDQMRFFLRGPNMSGVDNVTIEMNDDSASLFRYMQIINNSVNWATKSDRSRRIWEPTYSICYCSADQTNVEVSKIPDEESSTPCQVNQCLETIGLLSRIQQAMPEAEITPNVFISDKLTLKVTQVLSDALVVAARSLPEWCSRLVYKYPCLFTVETRNMYMQATAFGVSRTIVWLQQRRDAAVERARGSAQAGNSSAARQHDRYHEYRVGRLRHERVKVTRAEETLLDQAIRLMKFHADRKAVLEIEYTNEEGTGLGPTLEFYALVAAELQRKSLALWVCDDDDTHASKSGEEREVDLGEGKKPIGYYVRRVGGLFPAPLPPGTDETKRAADMFRVLGVFLAKVLLDGRLVDLPLSRPFLKLLVHPQIGDDARGPNLHKILSLDDFEEVNPVKGSFLKELRALAQRKRLIENDTSIDSNSKRRKIAELKLHIKGSTCRVEDLALNFTVNPPSKVFQYAEMELVDGGSDIDVTIDNVEQYVEKCEEFYLNTGIAYQMRAFRDGFDRVFPLRTLRAYSPEEVQRLLSGEQCPEWSRDDILNYTEPKLGYTRESPGFLRFVDVMEALTAQERKNFLQFATGCSSLPPGGLANLHPRLTIVRKVESGDGSYPSVNTCVHYLKLPEYSSSAILRERLLTAINEKGFHLN.

ANK repeat units follow at residues 374–403 and 405–434; these read VGQS…DVNK and HKSS…NPDL. Basic and acidic residues predominate over residues 433–455; that stretch reads DLRDEDGKTALDKARERSDDDHN. Disordered stretches follow at residues 433 to 494, 645 to 714, and 1376 to 1400; these read DLRD…ELPN, PMEI…KATA, and DPPK…ALPP. Composition is skewed to polar residues over residues 478–489, 652–661, and 670–688; these read ASTSKQPGTSTK, NQPSSSTAVP, and TVPS…NPST. 2 stretches are compositionally biased toward low complexity: residues 696-714 and 1383-1400; these read SSTP…KATA and PAGT…ALPP. Residues 1438–1510 enclose the MIB/HERC2 domain; it reads RSRGSYKISE…NFDIERVTST (73 aa). Disordered regions lie at residues 1538-1562, 1575-1629, 1652-1796, and 1811-1836; these read YTPK…GSSR, KNTT…SLQH, NQEP…LLGG, and ESLS…GKKP. Low complexity-rich tracts occupy residues 1543-1562 and 1575-1586; these read TGGP…GSSR and KNTTPAGTPSSG. Residues 1610–1629 show a composition bias toward polar residues; the sequence is TSGPSVASTGQAASAESLQH. Residues 1653-1666 are compositionally biased toward acidic residues; that stretch reads QEPEDEPMGGEESD. Residues 1667–1696 are compositionally biased toward low complexity; it reads SAASMRSAASSNSQMSMGSSSQQQQQQDSD. Acidic residues-rich tracts occupy residues 1736 to 1746 and 1756 to 1783; these read TDGDADADETN and DAME…DESS. Positions 1812–1823 are enriched in low complexity; sequence SLSDASSSAKDA. In terms of domain architecture, HECT spans 2240–2648; sequence FHADRKAVLE…AINEKGFHLN (409 aa). Cys-2617 acts as the Glycyl thioester intermediate in catalysis.

The protein belongs to the UPL family. K-HECT subfamily. As to expression, expressed in most tissues, including hypodermis, muscle, intestine, vulva, and neurons.

The catalysed reaction is S-ubiquitinyl-[E2 ubiquitin-conjugating enzyme]-L-cysteine + [acceptor protein]-L-lysine = [E2 ubiquitin-conjugating enzyme]-L-cysteine + N(6)-ubiquitinyl-[acceptor protein]-L-lysine.. The protein operates within protein modification; protein ubiquitination. In terms of biological role, E3 ubiquitin-protein ligase which accepts ubiquitin from an E2 ubiquitin-conjugating enzyme in the form of a thioester and then directly transfers the ubiquitin to targeted substrates. Involved in the ubiquitination and proteasomal-mediated degradation of cytoplasmic and mitochondrial proteins. Positively regulates lin-12 activity in the anchor cell (AC)/vulval precursor (VU) cell fate decision. Negatively regulates glp-1 activity in germline proliferation. May play a role in the formation of fibrous organelles, a hemidesmosome-like structure attaching muscles to the epidermis. Regulates germline DNA double-strand-break repair and apoptosis in response to DNA damage by recruiting E4 ubiquitin-protein ligase ufd-2 to DNA repair foci. The polypeptide is E3 ubiquitin-protein ligase hecd-1 (Caenorhabditis elegans).